We begin with the raw amino-acid sequence, 40 residues long: DCPSGWSSYEGHCYRVFNEPKNWADAERFCKLQPKHSHLV.

The cysteines at positions 2 and 13 are disulfide-linked.

Belongs to the snaclec family. As to quaternary structure, dimer (non-covalently linked) of heterodimers of subunits alpha and beta (disulfide-linked). As to expression, expressed by the venom gland.

It is found in the secreted. Functionally, interferes with one step of hemostasis (modulation of platelet aggregation, or coagulation cascade, for example). The protein is Snaclec LmrLEC-1 of Lachesis muta rhombeata (Bushmaster).